We begin with the raw amino-acid sequence, 446 residues long: Beta-glucosidase A (446 aa).

The active-site Proton donor is Glu166. Glu351 acts as the Nucleophile in catalysis.

This sequence belongs to the glycosyl hydrolase 1 family.

The catalysed reaction is Hydrolysis of terminal, non-reducing beta-D-glucosyl residues with release of beta-D-glucose.. It participates in glycan metabolism; cellulose degradation. The protein is Beta-glucosidase A (bglA) of Thermotoga maritima (strain ATCC 43589 / DSM 3109 / JCM 10099 / NBRC 100826 / MSB8).